The sequence spans 140 residues: MEIDYYDYEKLLEKAYEELPENVKHHKSRFEVPGALVTIEGNKTIIENFKDIAEALNRDPQHLLKFLLREIATAGTLEGKRVVLQGRFTPYLIANKIKKYIKEYVICPVCGSPDTKIIKRDRFYFLKCEACGAETPIQHL.

It belongs to the eIF-2-beta/eIF-5 family. As to quaternary structure, heterotrimer composed of an alpha, a beta and a gamma chain.

EIF-2 functions in the early steps of protein synthesis by forming a ternary complex with GTP and initiator tRNA. This is Translation initiation factor 2 subunit beta (eif2b) from Pyrococcus abyssi (strain GE5 / Orsay).